The following is a 577-amino-acid chain: Anthranilate synthase alpha subunit 1, chloroplastic (577 aa).

The N-terminal 34 residues, 1–34 (MASLVLSLRIAPSTPPLGLGGGRFRGRRGAVACR), are a transit peptide targeting the chloroplast.

This sequence belongs to the anthranilate synthase component I family. Heterotetramer consisting of two non-identical subunits: a beta subunit and a large alpha subunit.

It localises to the plastid. The protein resides in the chloroplast. The catalysed reaction is chorismate + L-glutamine = anthranilate + pyruvate + L-glutamate + H(+). Its pathway is amino-acid biosynthesis; L-tryptophan biosynthesis; L-tryptophan from chorismate: step 1/5. With respect to regulation, feedback inhibition by tryptophan. Functionally, part of a heterotetrameric complex that catalyzes the two-step biosynthesis of anthranilate, an intermediate in the biosynthesis of L-tryptophan. In the first step, the glutamine-binding beta subunit of anthranilate synthase (AS) provides the glutamine amidotransferase activity which generates ammonia as a substrate that, along with chorismate, is used in the second step, catalyzed by the large alpha subunit of AS to produce anthranilate. The protein is Anthranilate synthase alpha subunit 1, chloroplastic (ASA1) of Oryza sativa subsp. indica (Rice).